Reading from the N-terminus, the 309-residue chain is Olfactory receptor 2G3 (309 aa).

Over 1 to 25 (MGLGNESSLMDFILLGFSDHPRLEA) the chain is Extracellular. An N-linked (GlcNAc...) asparagine glycan is attached at asparagine 5. The helical transmembrane segment at 26 to 49 (VLFVFVLFFYLLTLVGNFTIIIIS) threads the bilayer. The Cytoplasmic portion of the chain corresponds to 50 to 57 (YLDPPLHT). Residues 58-79 (PMYFFLSNLSLLDICFTTSLAP) traverse the membrane as a helical segment. The Extracellular portion of the chain corresponds to 80–100 (QTLVNLQRPKKTITYGGCVAQ). An intrachain disulfide couples cysteine 97 to cysteine 189. The helical transmembrane segment at 101–120 (LYISLALGSTECILLADMAL) threads the bilayer. Residues 121–139 (DRYIAVCKPLHYVVIMNPR) are Cytoplasmic-facing. Residues 140–158 (LCQQLASISWLSGLASSLI) traverse the membrane as a helical segment. At 159–195 (HATFTLQLPLCGNHRLDHFICEVPALLKLACVDTTVN) the chain is on the extracellular side. Residues 196-219 (ELVLFVVSVLFVVIPPALISISYG) traverse the membrane as a helical segment. The Cytoplasmic portion of the chain corresponds to 220–236 (FITQAVLRIKSVEARHK). Residues 237-259 (AFSTCSSHLTVVIIFYGTIIYVY) form a helical membrane-spanning segment. Over 260–272 (LQPSDSYAQDQGK) the chain is Extracellular. The chain crosses the membrane as a helical span at residues 273–292 (FISLFYTMVTPTLNPIIYTL). The Cytoplasmic portion of the chain corresponds to 293-309 (RNKDMKEALRKLLSGKL).

It belongs to the G-protein coupled receptor 1 family.

It is found in the cell membrane. Its function is as follows. Odorant receptor. This is Olfactory receptor 2G3 (OR2G3) from Homo sapiens (Human).